We begin with the raw amino-acid sequence, 91 residues long: Acylphosphatase (91 aa).

Positions 3-90 (QYRIIVDGRV…EGHHRFSIVY (88 aa)) constitute an Acylphosphatase-like domain. Catalysis depends on residues Arg18 and Asn36.

It belongs to the acylphosphatase family.

The catalysed reaction is an acyl phosphate + H2O = a carboxylate + phosphate + H(+). The sequence is that of Acylphosphatase (acyP) from Bacillus subtilis (strain 168).